We begin with the raw amino-acid sequence, 76 residues long: Conotoxin MaIr332 (76 aa).

An N-terminal signal peptide occupies residues 1–21 (MKLTCVIVAVLFLTAWTFVTA). A propeptide spanning residues 22–48 (DDSGNGLENLFSKAHHEMKNPKDSKLN) is cleaved from the precursor. Cystine bridges form between Cys-51–Cys-66, Cys-58–Cys-70, and Cys-65–Cys-75.

It belongs to the conotoxin O1 superfamily. Expressed by the venom duct.

Its subcellular location is the secreted. The chain is Conotoxin MaIr332 from Conus marmoreus (Marble cone).